The sequence spans 142 residues: uncharacterized protein (142 aa).

Over residues 1–14 (MKNVSPRRNKHYKS) the composition is skewed to basic residues. The disordered stretch occupies residues 1-40 (MKNVSPRRNKHYKSYKPQVPLKKPVLLPQHPPYRNRRKKK). Positions 16–28 (KPQVPLKKPVLLP) are enriched in low complexity.

This is an uncharacterized protein from Aquifex aeolicus (strain VF5).